A 211-amino-acid polypeptide reads, in one-letter code: Protein-L-isoaspartate O-methyltransferase 2 (211 aa).

Ser-61 is a catalytic residue.

This sequence belongs to the methyltransferase superfamily. L-isoaspartyl/D-aspartyl protein methyltransferase family.

The protein localises to the cytoplasm. It carries out the reaction [protein]-L-isoaspartate + S-adenosyl-L-methionine = [protein]-L-isoaspartate alpha-methyl ester + S-adenosyl-L-homocysteine. In terms of biological role, catalyzes the methyl esterification of L-isoaspartyl residues in peptides and proteins that result from spontaneous decomposition of normal L-aspartyl and L-asparaginyl residues. It plays a role in the repair and/or degradation of damaged proteins. The protein is Protein-L-isoaspartate O-methyltransferase 2 of Polaromonas sp. (strain JS666 / ATCC BAA-500).